The following is a 70-amino-acid chain: Cecropin-P1 (70 aa).

An N-terminal signal peptide occupies residues Met1–Ser13. A propeptide spans Arg45–Val70 (removed in mature form).

In terms of tissue distribution, expressed in the body wall, intestine, uterus and ovary.

The protein localises to the secreted. Its function is as follows. Has antibacterial activity against several Gram-positive and Gram-negative bacteria. Is weakly active against yeasts. Acts by a nonpore mechanism. The sequence is that of Cecropin-P1 (ASCEC-1) from Ascaris suum (Pig roundworm).